The chain runs to 616 residues: Dihydroxy-acid dehydratase (616 aa).

Asp81 contacts Mg(2+). Cys122 contacts [2Fe-2S] cluster. Asp123 and Lys124 together coordinate Mg(2+). Lys124 is subject to N6-carboxylysine. Residue Cys195 participates in [2Fe-2S] cluster binding. Glu491 is a binding site for Mg(2+). Ser517 acts as the Proton acceptor in catalysis.

Belongs to the IlvD/Edd family. As to quaternary structure, homodimer. The cofactor is [2Fe-2S] cluster. Mg(2+) is required as a cofactor.

The catalysed reaction is (2R)-2,3-dihydroxy-3-methylbutanoate = 3-methyl-2-oxobutanoate + H2O. It carries out the reaction (2R,3R)-2,3-dihydroxy-3-methylpentanoate = (S)-3-methyl-2-oxopentanoate + H2O. The protein operates within amino-acid biosynthesis; L-isoleucine biosynthesis; L-isoleucine from 2-oxobutanoate: step 3/4. Its pathway is amino-acid biosynthesis; L-valine biosynthesis; L-valine from pyruvate: step 3/4. Functions in the biosynthesis of branched-chain amino acids. Catalyzes the dehydration of (2R,3R)-2,3-dihydroxy-3-methylpentanoate (2,3-dihydroxy-3-methylvalerate) into 2-oxo-3-methylpentanoate (2-oxo-3-methylvalerate) and of (2R)-2,3-dihydroxy-3-methylbutanoate (2,3-dihydroxyisovalerate) into 2-oxo-3-methylbutanoate (2-oxoisovalerate), the penultimate precursor to L-isoleucine and L-valine, respectively. This chain is Dihydroxy-acid dehydratase, found in Erwinia tasmaniensis (strain DSM 17950 / CFBP 7177 / CIP 109463 / NCPPB 4357 / Et1/99).